A 320-amino-acid chain; its full sequence is ATP-dependent 6-phosphofructokinase (320 aa).

Gly12 contributes to the ATP binding site. Residues 22–26 (RGVVR) and 55–60 (RYSVSD) each bind ADP. ATP-binding positions include 73 to 74 (RF) and 103 to 106 (GDGS). Asp104 contributes to the Mg(2+) binding site. 126-128 (TID) is a binding site for substrate. Asp128 functions as the Proton acceptor in the catalytic mechanism. Arg155 provides a ligand contact to ADP. Residues Arg163 and 170-172 (MGR) contribute to the substrate site. Residues 186 to 188 (GCE), Lys212, and 214 to 216 (KKH) contribute to the ADP site. Substrate contacts are provided by residues Glu223, Arg244, and 250 to 253 (HIQR).

The protein belongs to the phosphofructokinase type A (PFKA) family. ATP-dependent PFK group I subfamily. Prokaryotic clade 'B1' sub-subfamily. As to quaternary structure, homotetramer. It depends on Mg(2+) as a cofactor.

It localises to the cytoplasm. The enzyme catalyses beta-D-fructose 6-phosphate + ATP = beta-D-fructose 1,6-bisphosphate + ADP + H(+). It functions in the pathway carbohydrate degradation; glycolysis; D-glyceraldehyde 3-phosphate and glycerone phosphate from D-glucose: step 3/4. With respect to regulation, allosterically activated by ADP and other diphosphonucleosides, and allosterically inhibited by phosphoenolpyruvate. Functionally, catalyzes the phosphorylation of D-fructose 6-phosphate to fructose 1,6-bisphosphate by ATP, the first committing step of glycolysis. The protein is ATP-dependent 6-phosphofructokinase of Salmonella agona (strain SL483).